Reading from the N-terminus, the 227-residue chain is Cytochrome c oxidase subunit 2 (227 aa).

Residues 1–14 are Mitochondrial intermembrane-facing; sequence MAYPFQLGLQDATS. The helical transmembrane segment at 15–45 threads the bilayer; the sequence is PIMEELTNFHDHTLMIVFLISSLVLYIISLM. Residues 46–59 are Mitochondrial matrix-facing; sequence LTTKLTHTSTMDAQ. A helical transmembrane segment spans residues 60 to 87; that stretch reads EVETIWTILPAVILILIALPSLRILYMM. The Mitochondrial intermembrane segment spans residues 88-227; it reads DEINNPALTV…YFENWSASMI (140 aa). 6 residues coordinate Cu cation: H161, C196, E198, C200, H204, and M207. Residue E198 coordinates Mg(2+). A Phosphotyrosine modification is found at Y218.

It belongs to the cytochrome c oxidase subunit 2 family. As to quaternary structure, component of the cytochrome c oxidase (complex IV, CIV), a multisubunit enzyme composed of 14 subunits. The complex is composed of a catalytic core of 3 subunits MT-CO1, MT-CO2 and MT-CO3, encoded in the mitochondrial DNA, and 11 supernumerary subunits COX4I, COX5A, COX5B, COX6A, COX6B, COX6C, COX7A, COX7B, COX7C, COX8 and NDUFA4, which are encoded in the nuclear genome. The complex exists as a monomer or a dimer and forms supercomplexes (SCs) in the inner mitochondrial membrane with NADH-ubiquinone oxidoreductase (complex I, CI) and ubiquinol-cytochrome c oxidoreductase (cytochrome b-c1 complex, complex III, CIII), resulting in different assemblies (supercomplex SCI(1)III(2)IV(1) and megacomplex MCI(2)III(2)IV(2)). Found in a complex with TMEM177, COA6, COX18, COX20, SCO1 and SCO2. Interacts with TMEM177 in a COX20-dependent manner. Interacts with COX20. Interacts with COX16. Requires Cu cation as cofactor.

Its subcellular location is the mitochondrion inner membrane. It carries out the reaction 4 Fe(II)-[cytochrome c] + O2 + 8 H(+)(in) = 4 Fe(III)-[cytochrome c] + 2 H2O + 4 H(+)(out). In terms of biological role, component of the cytochrome c oxidase, the last enzyme in the mitochondrial electron transport chain which drives oxidative phosphorylation. The respiratory chain contains 3 multisubunit complexes succinate dehydrogenase (complex II, CII), ubiquinol-cytochrome c oxidoreductase (cytochrome b-c1 complex, complex III, CIII) and cytochrome c oxidase (complex IV, CIV), that cooperate to transfer electrons derived from NADH and succinate to molecular oxygen, creating an electrochemical gradient over the inner membrane that drives transmembrane transport and the ATP synthase. Cytochrome c oxidase is the component of the respiratory chain that catalyzes the reduction of oxygen to water. Electrons originating from reduced cytochrome c in the intermembrane space (IMS) are transferred via the dinuclear copper A center (CU(A)) of subunit 2 and heme A of subunit 1 to the active site in subunit 1, a binuclear center (BNC) formed by heme A3 and copper B (CU(B)). The BNC reduces molecular oxygen to 2 water molecules using 4 electrons from cytochrome c in the IMS and 4 protons from the mitochondrial matrix. In Oenomys hypoxanthus (Rufous-nosed rat), this protein is Cytochrome c oxidase subunit 2 (MT-CO2).